A 597-amino-acid polypeptide reads, in one-letter code: Elongation factor 4 (597 aa).

A tr-type G domain is found at 2–184 (QHIRNFSIIA…SIVARVPPPK (183 aa)). GTP is bound by residues 14–19 (DHGKST) and 131–134 (NKMD).

This sequence belongs to the TRAFAC class translation factor GTPase superfamily. Classic translation factor GTPase family. LepA subfamily.

The protein resides in the cell inner membrane. It catalyses the reaction GTP + H2O = GDP + phosphate + H(+). In terms of biological role, required for accurate and efficient protein synthesis under certain stress conditions. May act as a fidelity factor of the translation reaction, by catalyzing a one-codon backward translocation of tRNAs on improperly translocated ribosomes. Back-translocation proceeds from a post-translocation (POST) complex to a pre-translocation (PRE) complex, thus giving elongation factor G a second chance to translocate the tRNAs correctly. Binds to ribosomes in a GTP-dependent manner. The sequence is that of Elongation factor 4 from Bordetella bronchiseptica (strain ATCC BAA-588 / NCTC 13252 / RB50) (Alcaligenes bronchisepticus).